The primary structure comprises 95 residues: Aspartyl/glutamyl-tRNA(Asn/Gln) amidotransferase subunit C (95 aa).

Belongs to the GatC family. Heterotrimer of A, B and C subunits.

The enzyme catalyses L-glutamyl-tRNA(Gln) + L-glutamine + ATP + H2O = L-glutaminyl-tRNA(Gln) + L-glutamate + ADP + phosphate + H(+). It catalyses the reaction L-aspartyl-tRNA(Asn) + L-glutamine + ATP + H2O = L-asparaginyl-tRNA(Asn) + L-glutamate + ADP + phosphate + 2 H(+). Its function is as follows. Allows the formation of correctly charged Asn-tRNA(Asn) or Gln-tRNA(Gln) through the transamidation of misacylated Asp-tRNA(Asn) or Glu-tRNA(Gln) in organisms which lack either or both of asparaginyl-tRNA or glutaminyl-tRNA synthetases. The reaction takes place in the presence of glutamine and ATP through an activated phospho-Asp-tRNA(Asn) or phospho-Glu-tRNA(Gln). The chain is Aspartyl/glutamyl-tRNA(Asn/Gln) amidotransferase subunit C from Prosthecochloris aestuarii (strain DSM 271 / SK 413).